Consider the following 130-residue polypeptide: MSEEFKIEIVNPEKSFLSKEDVTEVVVPAFEGEMGILKDHISIISFLKPGIIKIFSKSGEDNYYVEDGIVEFKNNNLSVLTSSIFNIKDIDKDKISELLTQAEENSKNSDITDQNKYLVDQKIDVLKTLN.

The protein belongs to the ATPase epsilon chain family. In terms of assembly, F-type ATPases have 2 components, CF(1) - the catalytic core - and CF(0) - the membrane proton channel. CF(1) has five subunits: alpha(3), beta(3), gamma(1), delta(1), epsilon(1). CF(0) has three main subunits: a, b and c.

The protein resides in the cell inner membrane. Produces ATP from ADP in the presence of a proton gradient across the membrane. The chain is ATP synthase epsilon chain from Pelagibacter ubique (strain HTCC1062).